A 134-amino-acid chain; its full sequence is Protein NrdI (134 aa).

The protein belongs to the NrdI family.

Probably involved in ribonucleotide reductase function. This chain is Protein NrdI, found in Serratia proteamaculans (strain 568).